The sequence spans 127 residues: Fluoride-specific ion channel FluC (127 aa).

The next 4 helical transmembrane spans lie at 4–24 (LDYLTIAFGGAIGAVLRYLVS), 39–59 (GTIIVNSVGSFFLSFLMFAAI), 68–88 (AILFFGTGLLGAFTTFSTFTY), and 102–122 (VAYALANLLFAFTCAYFGMIL). The Na(+) site is built by Gly-78 and Thr-81.

This sequence belongs to the fluoride channel Fluc/FEX (TC 1.A.43) family.

It is found in the cell inner membrane. It catalyses the reaction fluoride(in) = fluoride(out). Na(+) is not transported, but it plays an essential structural role and its presence is essential for fluoride channel function. Its function is as follows. Fluoride-specific ion channel. Important for reducing fluoride concentration in the cell, thus reducing its toxicity. The sequence is that of Fluoride-specific ion channel FluC from Thermotoga maritima (strain ATCC 43589 / DSM 3109 / JCM 10099 / NBRC 100826 / MSB8).